The chain runs to 255 residues: Putative glycyl-radical enzyme activating enzyme MJ1632 (255 aa).

In terms of domain architecture, Radical SAM core spans 30 to 245 (SHISLSDKIT…SNVSCSLDFK (216 aa)). C45, C49, and C52 together coordinate [4Fe-4S] cluster. Residues 51-53 (YCF), G88, and 134-136 (DLK) each bind S-adenosyl-L-methionine.

This sequence belongs to the organic radical-activating enzymes family. [4Fe-4S] cluster is required as a cofactor.

It carries out the reaction glycyl-[protein] + reduced [flavodoxin] + S-adenosyl-L-methionine = glycin-2-yl radical-[protein] + semiquinone [flavodoxin] + 5'-deoxyadenosine + L-methionine + H(+). This is Putative glycyl-radical enzyme activating enzyme MJ1632 from Methanocaldococcus jannaschii (strain ATCC 43067 / DSM 2661 / JAL-1 / JCM 10045 / NBRC 100440) (Methanococcus jannaschii).